A 504-amino-acid polypeptide reads, in one-letter code: Pup--protein ligase (504 aa).

Glutamate 30 is a binding site for Mg(2+). Arginine 74 is a binding site for ATP. Tyrosine 76 lines the Mg(2+) pocket. Catalysis depends on aspartate 78, which acts as the Proton acceptor. Position 84 (glutamate 84) interacts with Mg(2+). 2 residues coordinate ATP: threonine 87 and tryptophan 459.

Belongs to the Pup ligase/Pup deamidase family. Pup-conjugating enzyme subfamily.

It carries out the reaction ATP + [prokaryotic ubiquitin-like protein]-L-glutamate + [protein]-L-lysine = ADP + phosphate + N(6)-([prokaryotic ubiquitin-like protein]-gamma-L-glutamyl)-[protein]-L-lysine.. Its pathway is protein degradation; proteasomal Pup-dependent pathway. The protein operates within protein modification; protein pupylation. Its function is as follows. Catalyzes the covalent attachment of the prokaryotic ubiquitin-like protein modifier Pup to the proteasomal substrate proteins, thereby targeting them for proteasomal degradation. This tagging system is termed pupylation. The ligation reaction involves the side-chain carboxylate of the C-terminal glutamate of Pup and the side-chain amino group of a substrate lysine. The sequence is that of Pup--protein ligase from Corynebacterium urealyticum (strain ATCC 43042 / DSM 7109).